Here is a 152-residue protein sequence, read N- to C-terminus: Ribosomal RNA large subunit methyltransferase H (152 aa).

S-adenosyl-L-methionine-binding positions include Leu-71, Gly-101, and Leu-120–Phe-125.

Belongs to the RNA methyltransferase RlmH family. Homodimer.

The protein resides in the cytoplasm. The catalysed reaction is pseudouridine(1915) in 23S rRNA + S-adenosyl-L-methionine = N(3)-methylpseudouridine(1915) in 23S rRNA + S-adenosyl-L-homocysteine + H(+). Functionally, specifically methylates the pseudouridine at position 1915 (m3Psi1915) in 23S rRNA. This is Ribosomal RNA large subunit methyltransferase H from Thermosipho melanesiensis (strain DSM 12029 / CIP 104789 / BI429).